A 494-amino-acid polypeptide reads, in one-letter code: DDB1- and CUL4-associated factor 4 (494 aa).

Residues 1–65 (MHQSSWKSRR…AGSSSVPDLP (65 aa)) are disordered. Positions 7 to 20 (KSRRHRRRGHRHSA) are enriched in basic residues. Positions 51-60 (STSSTAGSSS) are enriched in low complexity. WD repeat units follow at residues 367 to 406 (FHDS…CIRQ) and 409 to 450 (GHVN…LLRT).

As to quaternary structure, interacts with DDB1 and CUL4A.

It participates in protein modification; protein ubiquitination. Functionally, may function as a substrate receptor for CUL4-DDB1 E3 ubiquitin-protein ligase complex. This Bos taurus (Bovine) protein is DDB1- and CUL4-associated factor 4 (DCAF4).